The sequence spans 577 residues: Proline--tRNA ligase (577 aa).

This sequence belongs to the class-II aminoacyl-tRNA synthetase family. ProS type 1 subfamily. In terms of assembly, homodimer.

It is found in the cytoplasm. It catalyses the reaction tRNA(Pro) + L-proline + ATP = L-prolyl-tRNA(Pro) + AMP + diphosphate. Catalyzes the attachment of proline to tRNA(Pro) in a two-step reaction: proline is first activated by ATP to form Pro-AMP and then transferred to the acceptor end of tRNA(Pro). As ProRS can inadvertently accommodate and process non-cognate amino acids such as alanine and cysteine, to avoid such errors it has two additional distinct editing activities against alanine. One activity is designated as 'pretransfer' editing and involves the tRNA(Pro)-independent hydrolysis of activated Ala-AMP. The other activity is designated 'posttransfer' editing and involves deacylation of mischarged Ala-tRNA(Pro). The misacylated Cys-tRNA(Pro) is not edited by ProRS. This is Proline--tRNA ligase from Helicobacter pylori (strain G27).